The primary structure comprises 335 residues: Putative zinc metalloprotease CPE1693 (335 aa).

H17 contributes to the Zn(2+) binding site. Residue E18 is part of the active site. H21 contributes to the Zn(2+) binding site. 3 consecutive transmembrane segments (helical) span residues 88–110 (ILVMGAGAFMNYVLALIIFIGLA), 262–284 (LLWFMAFLSVQLAVFNLLPFPAL), and 312–334 (TVGFMLLMGLMVLVTIKDIIFPI). In terms of domain architecture, PDZ spans 96–174 (FMNYVLALII…PVELEIKRGN (79 aa)).

It belongs to the peptidase M50B family. The cofactor is Zn(2+).

It is found in the cell membrane. This Clostridium perfringens (strain 13 / Type A) protein is Putative zinc metalloprotease CPE1693.